Here is a 450-residue protein sequence, read N- to C-terminus: Tubulin alpha-3E chain (450 aa).

The MREC motif signature appears at 1–4; sequence MREC. Gln11 lines the GTP pocket. Lys40 bears the N6-acetyllysine mark. GTP is bound by residues Glu71, Ser140, Gly144, Thr145, Thr179, Asn206, and Asn228. Glu71 contacts Mg(2+). Glu254 is a catalytic residue. Position 282 is a 3'-nitrotyrosine (Tyr282). Residue Ser439 is modified to Phosphoserine. Tyr450 carries the post-translational modification 3'-nitrotyrosine.

The protein belongs to the tubulin family. Dimer of alpha and beta chains. A typical microtubule is a hollow water-filled tube with an outer diameter of 25 nm and an inner diameter of 15 nM. Alpha-beta heterodimers associate head-to-tail to form protofilaments running lengthwise along the microtubule wall with the beta-tubulin subunit facing the microtubule plus end conferring a structural polarity. Microtubules usually have 13 protofilaments but different protofilament numbers can be found in some organisms and specialized cells. Requires Mg(2+) as cofactor. Post-translationally, some glutamate residues at the C-terminus are polyglutamylated, resulting in polyglutamate chains on the gamma-carboxyl group. Polyglutamylation plays a key role in microtubule severing by spastin (SPAST). SPAST preferentially recognizes and acts on microtubules decorated with short polyglutamate tails: severing activity by SPAST increases as the number of glutamates per tubulin rises from one to eight, but decreases beyond this glutamylation threshold. Glutamylation is also involved in cilia motility. In terms of processing, some glutamate residues at the C-terminus are monoglycylated but not polyglycylated due to the absence of functional TTLL10 in human. Monoglycylation is mainly limited to tubulin incorporated into cilia and flagella axonemes, which is required for their stability and maintenance. Flagella glycylation controls sperm motility. Both polyglutamylation and monoglycylation can coexist on the same protein on adjacent residues, and lowering glycylation levels increases polyglutamylation, and reciprocally. Acetylation of alpha chains at Lys-40 is located inside the microtubule lumen. This modification has been correlated with increased microtubule stability, intracellular transport and ciliary assembly. Post-translationally, methylation of alpha chains at Lys-40 is found in mitotic microtubules and is required for normal mitosis and cytokinesis contributing to genomic stability. In terms of processing, nitration of Tyr-450 is irreversible and interferes with normal dynein intracellular distribution. Undergoes a tyrosination/detyrosination cycle, the cyclic removal and re-addition of a C-terminal tyrosine residue by the enzymes tubulin tyrosine carboxypeptidase (MATCAP1/KIAA0895L, VASH1 or VASH2) and tubulin tyrosine ligase (TTL), respectively. Post-translationally, tyrosination promotes microtubule interaction with CAP-Gly domain-containing proteins such as CLIP1, CLIP2 and DCTN1. Tyrosination regulates the initiation of dynein-dynactin motility via interaction with DCTN1, which brings the dynein-dynactin complex into contact with microtubules. In neurons, tyrosinated tubulins mediate the initiation of retrograde vesicle transport. In terms of processing, detyrosination is involved in metaphase plate congression by guiding chromosomes during mitosis: detyrosination promotes interaction with CENPE, promoting pole-proximal transport of chromosomes toward the equator. Detyrosination increases microtubules-dependent mechanotransduction in dystrophic cardiac and skeletal muscle. In cardiomyocytes, detyrosinated microtubules are required to resist to contractile compression during contraction: detyrosination promotes association with desmin (DES) at force-generating sarcomeres, leading to buckled microtubules and mechanical resistance to contraction.

The protein localises to the cytoplasm. The protein resides in the cytoskeleton. The catalysed reaction is GTP + H2O = GDP + phosphate + H(+). In terms of biological role, tubulin is the major constituent of microtubules, a cylinder consisting of laterally associated linear protofilaments composed of alpha- and beta-tubulin heterodimers. Microtubules grow by the addition of GTP-tubulin dimers to the microtubule end, where a stabilizing cap forms. Below the cap, tubulin dimers are in GDP-bound state, owing to GTPase activity of alpha-tubulin. The chain is Tubulin alpha-3E chain (TUBA3E) from Homo sapiens (Human).